Consider the following 247-residue polypeptide: 5-oxoprolinase subunit A (247 aa).

This sequence belongs to the LamB/PxpA family. In terms of assembly, forms a complex composed of PxpA, PxpB and PxpC.

It carries out the reaction 5-oxo-L-proline + ATP + 2 H2O = L-glutamate + ADP + phosphate + H(+). Catalyzes the cleavage of 5-oxoproline to form L-glutamate coupled to the hydrolysis of ATP to ADP and inorganic phosphate. This is 5-oxoprolinase subunit A from Ralstonia pickettii (strain 12J).